The primary structure comprises 291 residues: Elongation factor Ts (291 aa).

The involved in Mg(2+) ion dislocation from EF-Tu stretch occupies residues 79–82 (TDFV).

Belongs to the EF-Ts family.

The protein resides in the cytoplasm. In terms of biological role, associates with the EF-Tu.GDP complex and induces the exchange of GDP to GTP. It remains bound to the aminoacyl-tRNA.EF-Tu.GTP complex up to the GTP hydrolysis stage on the ribosome. The polypeptide is Elongation factor Ts (Stenotrophomonas maltophilia (strain K279a)).